The sequence spans 561 residues: Potassium-transporting ATPase potassium-binding subunit (561 aa).

The next 12 membrane-spanning stretches (helical) occupy residues 5–25, 60–80, 86–106, 130–150, 177–197, 247–267, 281–301, 324–344, 376–396, 415–435, 491–511, and 533–553; these read LAAGLQIAFVLAVLAIAYVPV, YGYAASVLGFSLASALFLYFL, VLPLSDGLSGVSPAVAFNTAI, VGLAVQNFVSAAVGMAVAIAL, ILLPFSFVIALILLSQGVIQS, PTPLSNIVEILAILLIPVCLT, LTLLAVMGILWSGLLAVTLAA, FGIPGSALFAVATTGTSTGAV, GLYGILVLALIAVFVGGLLVG, ALSILVMPALVLIGTAITVIL, ICMLLGRFLPIIFVLALAGAL, and GLLTGTVVLVAALTFFPALAL.

The protein belongs to the KdpA family. As to quaternary structure, the system is composed of three essential subunits: KdpA, KdpB and KdpC.

It is found in the cell membrane. Functionally, part of the high-affinity ATP-driven potassium transport (or Kdp) system, which catalyzes the hydrolysis of ATP coupled with the electrogenic transport of potassium into the cytoplasm. This subunit binds the extracellular potassium ions and delivers the ions to the membrane domain of KdpB through an intramembrane tunnel. The polypeptide is Potassium-transporting ATPase potassium-binding subunit (Rhodococcus erythropolis (strain PR4 / NBRC 100887)).